The chain runs to 356 residues: Uroporphyrinogen decarboxylase (356 aa).

Substrate-binding positions include 25-29 (RQAGR), D75, Y152, T207, and H326.

Belongs to the uroporphyrinogen decarboxylase family. In terms of assembly, homodimer.

Its subcellular location is the cytoplasm. It carries out the reaction uroporphyrinogen III + 4 H(+) = coproporphyrinogen III + 4 CO2. The protein operates within porphyrin-containing compound metabolism; protoporphyrin-IX biosynthesis; coproporphyrinogen-III from 5-aminolevulinate: step 4/4. Functionally, catalyzes the decarboxylation of four acetate groups of uroporphyrinogen-III to yield coproporphyrinogen-III. The chain is Uroporphyrinogen decarboxylase from Magnetococcus marinus (strain ATCC BAA-1437 / JCM 17883 / MC-1).